Here is a 285-residue protein sequence, read N- to C-terminus: Polyamine aminopropyltransferase (285 aa).

In terms of domain architecture, PABS spans 5-241; that stretch reads DTWFTEHFQT…GWWSVTLSSK (237 aa). Residue Gln35 participates in S-methyl-5'-thioadenosine binding. Spermidine-binding residues include His66 and Asp90. S-methyl-5'-thioadenosine-binding positions include Asp110 and 141–142; that span reads DG. Asp160 acts as the Proton acceptor in catalysis. A spermidine-binding site is contributed by 160 to 163; that stretch reads DSTD. Pro167 provides a ligand contact to S-methyl-5'-thioadenosine.

It belongs to the spermidine/spermine synthase family. Homodimer or homotetramer.

It localises to the cytoplasm. The catalysed reaction is S-adenosyl 3-(methylsulfanyl)propylamine + putrescine = S-methyl-5'-thioadenosine + spermidine + H(+). Its pathway is amine and polyamine biosynthesis; spermidine biosynthesis; spermidine from putrescine: step 1/1. Catalyzes the irreversible transfer of a propylamine group from the amino donor S-adenosylmethioninamine (decarboxy-AdoMet) to putrescine (1,4-diaminobutane) to yield spermidine. This chain is Polyamine aminopropyltransferase, found in Xylella fastidiosa (strain Temecula1 / ATCC 700964).